The primary structure comprises 354 residues: Histidinol-phosphate aminotransferase (354 aa).

Residue Lys-210 is modified to N6-(pyridoxal phosphate)lysine.

Belongs to the class-II pyridoxal-phosphate-dependent aminotransferase family. Histidinol-phosphate aminotransferase subfamily. In terms of assembly, homodimer. Pyridoxal 5'-phosphate serves as cofactor.

It catalyses the reaction L-histidinol phosphate + 2-oxoglutarate = 3-(imidazol-4-yl)-2-oxopropyl phosphate + L-glutamate. Its pathway is amino-acid biosynthesis; L-histidine biosynthesis; L-histidine from 5-phospho-alpha-D-ribose 1-diphosphate: step 7/9. The polypeptide is Histidinol-phosphate aminotransferase (Clostridium botulinum (strain Langeland / NCTC 10281 / Type F)).